We begin with the raw amino-acid sequence, 355 residues long: UDP-N-acetylglucosamine--N-acetylmuramyl-(pentapeptide) pyrophosphoryl-undecaprenol N-acetylglucosamine transferase (355 aa).

UDP-N-acetyl-alpha-D-glucosamine contacts are provided by residues 7–9 (TGG), asparagine 119, arginine 159, serine 187, isoleucine 241, and glutamine 286.

This sequence belongs to the glycosyltransferase 28 family. MurG subfamily.

The protein localises to the cell inner membrane. The enzyme catalyses di-trans,octa-cis-undecaprenyl diphospho-N-acetyl-alpha-D-muramoyl-L-alanyl-D-glutamyl-meso-2,6-diaminopimeloyl-D-alanyl-D-alanine + UDP-N-acetyl-alpha-D-glucosamine = di-trans,octa-cis-undecaprenyl diphospho-[N-acetyl-alpha-D-glucosaminyl-(1-&gt;4)]-N-acetyl-alpha-D-muramoyl-L-alanyl-D-glutamyl-meso-2,6-diaminopimeloyl-D-alanyl-D-alanine + UDP + H(+). The protein operates within cell wall biogenesis; peptidoglycan biosynthesis. Functionally, cell wall formation. Catalyzes the transfer of a GlcNAc subunit on undecaprenyl-pyrophosphoryl-MurNAc-pentapeptide (lipid intermediate I) to form undecaprenyl-pyrophosphoryl-MurNAc-(pentapeptide)GlcNAc (lipid intermediate II). The chain is UDP-N-acetylglucosamine--N-acetylmuramyl-(pentapeptide) pyrophosphoryl-undecaprenol N-acetylglucosamine transferase from Nitrosomonas eutropha (strain DSM 101675 / C91 / Nm57).